The sequence spans 538 residues: Cytochrome P450 monooxygenase okaG (538 aa).

A helical membrane pass occupies residues 3–23; it reads LISPLAAVLSAMAIVLGLLFF. Cysteine 484 contacts heme.

It belongs to the cytochrome P450 family. The cofactor is heme.

The protein localises to the membrane. The catalysed reaction is 12-deshydroxyl okaramine E + 2 reduced [NADPH--hemoprotein reductase] + 2 O2 = 3-desmethyl okaramine B + 2 oxidized [NADPH--hemoprotein reductase] + 2 H2O + 2 H(+). Its pathway is alkaloid biosynthesis. In terms of biological role, nonribosomal peptide synthetase; part of the gene cluster that mediates the biosynthesis of okaramine B, a prenylated indole alkaloid that possesses an unusual octacyclic ring system, including a four-membered azetidine ring and an eight-membered azocine ring, and that exhibits insecticidal activity against silkworm larvae. Within the pathway, okaG acts as a 2,3-diol synthase that installs 2,3-diol on the okaramine scaffold to convert 12-deshydroxyl okaramine E into 3-desmethyl okaramine B. OkaG is also able to produce use okaramine E and produce okaramine D with the help of the methyltransferase okaF. The biosynthesis begins with the NRPS okaA that condenses two tryptophan molecules into cyclo(L-Trp-L-Trp). Prenylation by the prenyltransferase okaC then leads to the formation of cyclo(N8-(alpha,alpha-dimethylallyl)-L-Trp-6a-(alpha,alpha-dime-thylallyl)-L-Trp). This is followed by indole 2,3-epoxidation by the FAD-dependent monooxygenase okaB to facilitate the formation of the hexahydropyrrolo[2,3-b]indole (HPI) moiety of okaramine C. The cytochrome P450 monooxygenase okaD then likely catalyzes formation of the eight-membered ring of okaramine A. The dioxygenase okaE further forms the unusual 2-dimethyl-3-methyl-azetidine ring to yield 12-deshydroxyl okaramine E, as well as the hydroxylation of 12-deshydroxyl okaramine E to produce okaramine E. The cytochrome P450 monoxygenase okaG converts 12-deshydroxyl okaramine E into 3-desmethyl okaramine B which is further methylated by the methyltransferase okaF into okaramine B. In a shunt pathway, okaG and okaF together are also able to convert okaramine E into okaramine D. Okaramine H is produced by nonenzymatic conversion from okaramine A. The sequence is that of Cytochrome P450 monooxygenase okaG from Penicillium ochrochloron.